Reading from the N-terminus, the 95-residue chain is Cobalt transport protein CbiN (95 aa).

The next 2 helical transmembrane spans lie at 5-25 (HIIL…IYAG) and 67-87 (LLFA…IGYY).

Belongs to the CbiN family. In terms of assembly, forms an energy-coupling factor (ECF) transporter complex composed of an ATP-binding protein (A component, CbiO), a transmembrane protein (T component, CbiQ) and 2 possible substrate-capture proteins (S components, CbiM and CbiN) of unknown stoichimetry.

The protein resides in the cell membrane. Its pathway is cofactor biosynthesis; adenosylcobalamin biosynthesis. Functionally, part of the energy-coupling factor (ECF) transporter complex CbiMNOQ involved in cobalt import. In Methanocaldococcus jannaschii (strain ATCC 43067 / DSM 2661 / JAL-1 / JCM 10045 / NBRC 100440) (Methanococcus jannaschii), this protein is Cobalt transport protein CbiN.